We begin with the raw amino-acid sequence, 111 residues long: T cell receptor beta variable 30 (111 aa).

The first 18 residues, 1-18, serve as a signal peptide directing secretion; sequence MLCSLLALLLGTFFGVRS. The Ig-like domain maps to 19-111; sequence QTIHQWPATL…DSGFYLCAWS (93 aa). A disulfide bond links Cys40 and Cys108. Asn80 carries an N-linked (GlcNAc...) asparagine glycan.

As to quaternary structure, alpha-beta TR is a heterodimer composed of an alpha and beta chain; disulfide-linked. The alpha-beta TR is associated with the transmembrane signaling CD3 coreceptor proteins to form the TR-CD3 (TcR or TCR). The assembly of alpha-beta TR heterodimers with CD3 occurs in the endoplasmic reticulum where a single alpha-beta TR heterodimer associates with one CD3D-CD3E heterodimer, one CD3G-CD3E heterodimer and one CD247 homodimer forming a stable octameric structure. CD3D-CD3E and CD3G-CD3E heterodimers preferentially associate with TR alpha and TR beta chains, respectively. The association of the CD247 homodimer is the last step of TcR assembly in the endoplasmic reticulum and is required for transport to the cell surface.

The protein resides in the cell membrane. In terms of biological role, v region of the variable domain of T cell receptor (TR) beta chain that participates in the antigen recognition. Alpha-beta T cell receptors are antigen specific receptors which are essential to the immune response and are present on the cell surface of T lymphocytes. Recognize peptide-major histocompatibility (MH) (pMH) complexes that are displayed by antigen presenting cells (APC), a prerequisite for efficient T cell adaptive immunity against pathogens. Binding of alpha-beta TR to pMH complex initiates TR-CD3 clustering on the cell surface and intracellular activation of LCK that phosphorylates the ITAM motifs of CD3G, CD3D, CD3E and CD247 enabling the recruitment of ZAP70. In turn ZAP70 phosphorylates LAT, which recruits numerous signaling molecules to form the LAT signalosome. The LAT signalosome propagates signal branching to three major signaling pathways, the calcium, the mitogen-activated protein kinase (MAPK) kinase and the nuclear factor NF-kappa-B (NF-kB) pathways, leading to the mobilization of transcription factors that are critical for gene expression and essential for T cell growth and differentiation. The T cell repertoire is generated in the thymus, by V-(D)-J rearrangement. This repertoire is then shaped by intrathymic selection events to generate a peripheral T cell pool of self-MH restricted, non-autoaggressive T cells. Post-thymic interaction of alpha-beta TR with the pMH complexes shapes TR structural and functional avidity. The protein is T cell receptor beta variable 30 of Homo sapiens (Human).